The primary structure comprises 390 residues: MKFVDEASILVVAGDGGNGCVSFRREKYIPKGGPDGGDGGDGGDVWMEADENLNTLIDYRFEKSFRAERGQNGASRDCTGKRGKDVTIKVPVGTRVIDQGTGETMGDMTKHGQRLLVAKGGWHGLGNTRFKSSVNRTPRQKTNGTPGDKRELLLELMLLADVGMLGMPNAGKSTFIRAVSAAKPKVADYPFTTLVPSLGVVRMDNEKSFVVADIPGLIEGAAEGAGLGIRFLKHLERCRVLLHLIDIDPIDGTDPVENARIIISELEKYSQDLATKPRWLVFNKIDLLDKVEAEEKAKAIAEALGWEDKYYLISAASGLGVKDLCWDVMTFIIENPVVQAEEAKQPEKVEFMWDDYHRQQLEEIAEEDDEDWDDDWDEDDEEGVEFIYKR.

Residues 1-159 (MKFVDEASIL…RELLLELMLL (159 aa)) enclose the Obg domain. The interval 127–147 (NTRFKSSVNRTPRQKTNGTPG) is disordered. Over residues 129–145 (RFKSSVNRTPRQKTNGT) the composition is skewed to polar residues. Positions 160 to 333 (ADVGMLGMPN…LCWDVMTFII (174 aa)) constitute an OBG-type G domain. Residues 166–173 (GMPNAGKS), 191–195 (FTTLV), 213–216 (DIPG), 283–286 (NKID), and 314–316 (SAA) each bind GTP. Mg(2+)-binding residues include Ser-173 and Thr-193.

This sequence belongs to the TRAFAC class OBG-HflX-like GTPase superfamily. OBG GTPase family. As to quaternary structure, monomer. It depends on Mg(2+) as a cofactor.

It localises to the cytoplasm. An essential GTPase which binds GTP, GDP and possibly (p)ppGpp with moderate affinity, with high nucleotide exchange rates and a fairly low GTP hydrolysis rate. Plays a role in control of the cell cycle, stress response, ribosome biogenesis and in those bacteria that undergo differentiation, in morphogenesis control. The protein is GTPase Obg of Escherichia coli (strain K12 / DH10B).